We begin with the raw amino-acid sequence, 498 residues long: ATP synthase subunit beta, chloroplastic (498 aa).

172–179 (GGAGVGKT) lines the ATP pocket.

The protein belongs to the ATPase alpha/beta chains family. As to quaternary structure, F-type ATPases have 2 components, CF(1) - the catalytic core - and CF(0) - the membrane proton channel. CF(1) has five subunits: alpha(3), beta(3), gamma(1), delta(1), epsilon(1). CF(0) has four main subunits: a(1), b(1), b'(1) and c(9-12).

Its subcellular location is the plastid. It is found in the chloroplast thylakoid membrane. The catalysed reaction is ATP + H2O + 4 H(+)(in) = ADP + phosphate + 5 H(+)(out). Produces ATP from ADP in the presence of a proton gradient across the membrane. The catalytic sites are hosted primarily by the beta subunits. This is ATP synthase subunit beta, chloroplastic from Nicotiana tomentosiformis (Tobacco).